The sequence spans 417 residues: Serine--tRNA ligase (417 aa).

226–228 (TSE) provides a ligand contact to L-serine. Residues 257–259 (RRE) and Val-273 contribute to the ATP site. An L-serine-binding site is contributed by Glu-280. 344 to 347 (EVTS) is an ATP binding site. Thr-379 contributes to the L-serine binding site.

The protein belongs to the class-II aminoacyl-tRNA synthetase family. Type-1 seryl-tRNA synthetase subfamily. Homodimer. The tRNA molecule binds across the dimer.

It localises to the cytoplasm. It catalyses the reaction tRNA(Ser) + L-serine + ATP = L-seryl-tRNA(Ser) + AMP + diphosphate + H(+). It carries out the reaction tRNA(Sec) + L-serine + ATP = L-seryl-tRNA(Sec) + AMP + diphosphate + H(+). The protein operates within aminoacyl-tRNA biosynthesis; selenocysteinyl-tRNA(Sec) biosynthesis; L-seryl-tRNA(Sec) from L-serine and tRNA(Sec): step 1/1. Functionally, catalyzes the attachment of serine to tRNA(Ser). Is also able to aminoacylate tRNA(Sec) with serine, to form the misacylated tRNA L-seryl-tRNA(Sec), which will be further converted into selenocysteinyl-tRNA(Sec). The polypeptide is Serine--tRNA ligase (Tropheryma whipplei (strain Twist) (Whipple's bacillus)).